The primary structure comprises 132 residues: Nickel-responsive regulator (132 aa).

Ni(2+) is bound by residues H76, H87, H89, and C95.

This sequence belongs to the transcriptional regulatory CopG/NikR family. In terms of assembly, homotetramer. Ni(2+) serves as cofactor.

Functionally, transcriptional repressor of the nikABCDE operon. Is active in the presence of excessive concentrations of intracellular nickel. The protein is Nickel-responsive regulator of Klebsiella pneumoniae subsp. pneumoniae (strain ATCC 700721 / MGH 78578).